Reading from the N-terminus, the 164-residue chain is NADH-quinone oxidoreductase subunit I (164 aa).

4Fe-4S ferredoxin-type domains follow at residues 54–84 (LRRYPNGEERCIACKLCEAICPAQAITIEAG) and 95–124 (VRYDIDMVKCIYCGFCQEACPVDAIVEGPN). Residues cysteine 64, cysteine 67, cysteine 70, cysteine 74, cysteine 104, cysteine 107, cysteine 110, and cysteine 114 each coordinate [4Fe-4S] cluster.

The protein belongs to the complex I 23 kDa subunit family. As to quaternary structure, NDH-1 is composed of 14 different subunits. Subunits NuoA, H, J, K, L, M, N constitute the membrane sector of the complex. Requires [4Fe-4S] cluster as cofactor.

It localises to the cell inner membrane. It catalyses the reaction a quinone + NADH + 5 H(+)(in) = a quinol + NAD(+) + 4 H(+)(out). In terms of biological role, NDH-1 shuttles electrons from NADH, via FMN and iron-sulfur (Fe-S) centers, to quinones in the respiratory chain. The immediate electron acceptor for the enzyme in this species is believed to be ubiquinone. Couples the redox reaction to proton translocation (for every two electrons transferred, four hydrogen ions are translocated across the cytoplasmic membrane), and thus conserves the redox energy in a proton gradient. In Mesorhizobium japonicum (strain LMG 29417 / CECT 9101 / MAFF 303099) (Mesorhizobium loti (strain MAFF 303099)), this protein is NADH-quinone oxidoreductase subunit I.